Reading from the N-terminus, the 571-residue chain is Translation initiation factor IF-2 (571 aa).

Residues 71–239 form the tr-type G domain; sequence RRPPVVVIMG…ILLLAELEDY (169 aa). The G1 stretch occupies residues 80–87; that stretch reads GHVDHGKT. A GTP-binding site is contributed by 80-87; sequence GHVDHGKT. Residues 105–109 are G2; it reads GITQH. Residues 126–129 are G3; sequence DTPG. GTP contacts are provided by residues 126–130 and 180–183; these read DTPGH and NKID. Residues 180-183 form a G4 region; it reads NKID. Residues 216-218 are G5; that stretch reads SAK.

The protein belongs to the TRAFAC class translation factor GTPase superfamily. Classic translation factor GTPase family. IF-2 subfamily.

The protein resides in the cytoplasm. In terms of biological role, one of the essential components for the initiation of protein synthesis. Protects formylmethionyl-tRNA from spontaneous hydrolysis and promotes its binding to the 30S ribosomal subunits. Also involved in the hydrolysis of GTP during the formation of the 70S ribosomal complex. The polypeptide is Translation initiation factor IF-2 (Thermus thermophilus (strain ATCC BAA-163 / DSM 7039 / HB27)).